The primary structure comprises 311 residues: 1,4-dihydroxy-2-naphthoate octaprenyltransferase (311 aa).

Transmembrane regions (helical) follow at residues 31 to 51 (LTAS…YVKV), 53 to 73 (LLLF…TNLF), 104 to 126 (TILQ…ICAS), 131 to 153 (LALI…LPIA), 157 to 177 (FGEL…SFFI), 182 to 202 (INMQ…AINL), 220 to 240 (LAIL…FAVA), 242 to 262 (IWVV…VVFL), and 290 to 310 (TAQT…ISYF).

This sequence belongs to the MenA family. Type 1 subfamily.

It localises to the cell membrane. The enzyme catalyses an all-trans-polyprenyl diphosphate + 1,4-dihydroxy-2-naphthoate + H(+) = a 2-demethylmenaquinol + CO2 + diphosphate. The protein operates within quinol/quinone metabolism; menaquinone biosynthesis; menaquinol from 1,4-dihydroxy-2-naphthoate: step 1/2. In terms of biological role, conversion of 1,4-dihydroxy-2-naphthoate (DHNA) to demethylmenaquinone (DMK). In Bacillus subtilis (strain 168), this protein is 1,4-dihydroxy-2-naphthoate octaprenyltransferase.